Consider the following 60-residue polypeptide: Large ribosomal subunit protein bL33 (60 aa).

It belongs to the bacterial ribosomal protein bL33 family.

The protein is Large ribosomal subunit protein bL33 of Chlorobium chlorochromatii (strain CaD3).